Consider the following 238-residue polypeptide: GATA transcription factor 7 (238 aa).

Residues 24-64 are disordered; that stretch reads TSLESSSSQRKEDEQEREKFKSFSDQSTRLSPPEDLLSFPG. Positions 32-45 are enriched in basic and acidic residues; the sequence is QRKEDEQEREKFKS. The Nuclear localization signal motif lies at 112–119; sequence KPRSKRRR. A GATA-type zinc finger spans residues 160–214; that stretch reads QQLRRCCSHCGVQKTPQWRMGPLGAKTLCNACGVRFKSGRLLPEYRPACSPTFTN.

This sequence belongs to the type IV zinc-finger family. Class A subfamily.

It localises to the nucleus. Transcriptional activator that specifically binds 5'-GATA-3' or 5'-GAT-3' motifs within gene promoters. May be involved in the regulation of some light-responsive genes. This chain is GATA transcription factor 7 (GATA7), found in Arabidopsis thaliana (Mouse-ear cress).